The chain runs to 436 residues: 3-ketoacyl-CoA thiolase (436 aa).

Cys99 acts as the Acyl-thioester intermediate in catalysis. Residues His392 and Cys422 each act as proton acceptor in the active site.

The protein belongs to the thiolase-like superfamily. Thiolase family. As to quaternary structure, heterotetramer of two alpha chains (FadJ) and two beta chains (FadI).

The protein resides in the cytoplasm. It carries out the reaction an acyl-CoA + acetyl-CoA = a 3-oxoacyl-CoA + CoA. It participates in lipid metabolism; fatty acid beta-oxidation. Catalyzes the final step of fatty acid oxidation in which acetyl-CoA is released and the CoA ester of a fatty acid two carbons shorter is formed. The protein is 3-ketoacyl-CoA thiolase of Yersinia pestis bv. Antiqua (strain Angola).